Reading from the N-terminus, the 136-residue chain is Putative pre-16S rRNA nuclease (136 aa).

The protein belongs to the YqgF nuclease family.

Its subcellular location is the cytoplasm. Its function is as follows. Could be a nuclease involved in processing of the 5'-end of pre-16S rRNA. The polypeptide is Putative pre-16S rRNA nuclease (Francisella philomiragia subsp. philomiragia (strain ATCC 25017 / CCUG 19701 / FSC 153 / O#319-036)).